We begin with the raw amino-acid sequence, 420 residues long: D-inositol 3-phosphate glycosyltransferase (420 aa).

His-13 is a binding site for 1D-myo-inositol 3-phosphate. UDP-N-acetyl-alpha-D-glucosamine contacts are provided by residues Gln-19–Pro-20 and Gly-27. 1D-myo-inositol 3-phosphate-binding positions include Asp-24–Asn-29, Lys-82, Tyr-115, Thr-139, and Arg-159. 3 residues coordinate UDP-N-acetyl-alpha-D-glucosamine: Arg-233, Lys-238, and Val-294. Phe-303, Arg-304, and Ala-306 together coordinate Mg(2+). Residues Glu-316 and Glu-324 each contribute to the UDP-N-acetyl-alpha-D-glucosamine site. Mg(2+) is bound at residue Thr-330.

It belongs to the glycosyltransferase group 1 family. MshA subfamily. In terms of assembly, homodimer.

The catalysed reaction is 1D-myo-inositol 3-phosphate + UDP-N-acetyl-alpha-D-glucosamine = 1D-myo-inositol 2-acetamido-2-deoxy-alpha-D-glucopyranoside 3-phosphate + UDP + H(+). Functionally, catalyzes the transfer of a N-acetyl-glucosamine moiety to 1D-myo-inositol 3-phosphate to produce 1D-myo-inositol 2-acetamido-2-deoxy-glucopyranoside 3-phosphate in the mycothiol biosynthesis pathway. In Pseudarthrobacter chlorophenolicus (strain ATCC 700700 / DSM 12829 / CIP 107037 / JCM 12360 / KCTC 9906 / NCIMB 13794 / A6) (Arthrobacter chlorophenolicus), this protein is D-inositol 3-phosphate glycosyltransferase.